Consider the following 411-residue polypeptide: S-adenosylmethionine synthase (411 aa).

Residue histidine 15 coordinates ATP. A Mg(2+)-binding site is contributed by aspartate 17. A K(+)-binding site is contributed by glutamate 43. L-methionine contacts are provided by glutamate 56 and glutamine 100. The segment at 100-110 (QSPDIAQGVNE) is flexible loop. Residues 171-173 (DGK), 248-249 (KF), aspartate 257, 263-264 (RK), alanine 280, and lysine 284 each bind ATP. Aspartate 257 is an L-methionine binding site. L-methionine is bound at residue lysine 288.

This sequence belongs to the AdoMet synthase family. Homotetramer; dimer of dimers. Mg(2+) serves as cofactor. The cofactor is K(+).

It is found in the cytoplasm. It carries out the reaction L-methionine + ATP + H2O = S-adenosyl-L-methionine + phosphate + diphosphate. It participates in amino-acid biosynthesis; S-adenosyl-L-methionine biosynthesis; S-adenosyl-L-methionine from L-methionine: step 1/1. Functionally, catalyzes the formation of S-adenosylmethionine (AdoMet) from methionine and ATP. The overall synthetic reaction is composed of two sequential steps, AdoMet formation and the subsequent tripolyphosphate hydrolysis which occurs prior to release of AdoMet from the enzyme. This chain is S-adenosylmethionine synthase, found in Synechococcus sp. (strain CC9605).